The chain runs to 515 residues: 13S globulin seed storage protein (515 aa).

Residues 1–22 form the signal peptide; it reads MSTKLILSFSLCLMVLSCSAQA. The interval 23-96 is igE-binding epitope; sequence AQLWPWRKGQ…RYVIQPGGLL (74 aa). 2 disulfide bridges follow: cysteine 47–cysteine 80 and cysteine 123–cysteine 327. Residues 52–272 form the Cupin type-1 1 domain; the sequence is LTASEPSRRV…FRDVDRETIS (221 aa). The segment at 97-172 is igE-binding epitope with a very strong IgE-binding activity; that stretch reads LPSYSNAPYI…REGDVIPSPA (76 aa). 3 disordered regions span residues 123 to 156, 210 to 241, and 295 to 320; these read CPETFQSDSEYPQSQRGQHSRESESQESSRGDQH, LAGQSQQGREERRSQQQTREEGGDRQSRESDD, and PEDSEEGYERQRGDRKRDERGSGRSN. 3 stretches are compositionally biased toward basic and acidic residues: residues 141–156, 217–239, and 295–316; these read HSRESESQESSRGDQH, GREERRSQQQTREEGGDRQSRES, and PEDSEEGYERQRGDRKRDERGS. IgE-binding epitope stretches follow at residues 173-248 and 249-320; these read GVVQ…LIGA and NILS…GRSN. The Cupin type-1 2 domain maps to 333–482; the sequence is QNVNRPSHAD…SYDISTEEAY (150 aa). An igE-binding epitope with a strong IgE-binding activity region spans residues 347–387; the sequence is RAGRINTVNSNNLPILEFLQLSAQHVVLYKNAIIGPRWNLN. IgE-binding epitope regions lie at residues 407–457, 440–476, and 475–511; these read EGKS…PIAG, EWVELKNNDNAITSPIAGRTSVLRAIPVEVLANSYDI, and DISTEEAYKLKNGRQEVEVFRPFQSRYEKEEEKERER.

The protein belongs to the 11S seed storage protein (globulins) family. As to quaternary structure, homohexamer. Post-translationally, proteolytically processed from a single precursor to produce an acidic and a basic chain that are linked by a disulfide bond. In terms of tissue distribution, expressed in seeds (at protein level).

Its function is as follows. Seed storage protein. This Fagopyrum tataricum (Tartarian buckwheat) protein is 13S globulin seed storage protein.